The chain runs to 296 residues: MNTIEKPTEKAEILLEALPYIRRFYNRTVVIKYGGHAMVDDELKQSFAKDVLMMKYIGINPVVVHGGGPQIGSFLKKLGKDSKFIQGMRVTDEETMNIVEMVLVGKVNKEIVGLINHAGGKAVGLSGKDGSLIRAEKYYLSAEKAKDTPPEIIDIGLVGKVKEINADLITSLVRDGFIPVIAPTGAGDSGETYNINADIVAGAIAAALKAEKLILLTDVAGVLNKQGELINTMNNMEALEMIHEGVIEGGMFPKVKCCMKSLREGVRKAHIVDGRLKHAILLEMFTDKGIGTELVL.

Substrate is bound by residues 67 to 68 (GG), R89, and N194.

Belongs to the acetylglutamate kinase family. ArgB subfamily.

The protein resides in the cytoplasm. It catalyses the reaction N-acetyl-L-glutamate + ATP = N-acetyl-L-glutamyl 5-phosphate + ADP. It functions in the pathway amino-acid biosynthesis; L-arginine biosynthesis; N(2)-acetyl-L-ornithine from L-glutamate: step 2/4. Its function is as follows. Catalyzes the ATP-dependent phosphorylation of N-acetyl-L-glutamate. This is Acetylglutamate kinase from Syntrophus aciditrophicus (strain SB).